A 1426-amino-acid chain; its full sequence is A disintegrin and metalloproteinase with thrombospondin motifs 13 (1426 aa).

The first 33 residues, 1 to 33 (MSQLCLWLTCQPCYAVSVRGILTGAIFILGCWG), serve as a signal peptide directing secretion. Positions 34-76 (LSDFQKSLLQDLEPKDVSSYFGHHAAPFTGHPPSHLQRLRRRR) are excised as a propeptide. Residues 74 to 291 (RRRTLEDILH…GQMHCFQDPP (218 aa)) enclose the Peptidase M12B domain. Residue E85 coordinates Ca(2+). N-linked (GlcNAc...) asparagine glycosylation is found at N144 and N148. Cystine bridges form between C157–C210, C204–C286, and C246–C270. The Ca(2+) site is built by D175, D184, E186, D189, and E214. H226 contacts Zn(2+). Residue E227 is part of the active site. Zn(2+) contacts are provided by H230 and H236. Ca(2+) is bound by residues T281 and D289. The Disintegrin domain maps to 295 to 388 (SGLTRHQLMA…LAELAPVAAV (94 aa)). 11 cysteine pairs are disulfide-bonded: C316-C342, C327-C352, C337-C371, C365-C376, C401-C438, C405-C443, C416-C428, C488-C527, C513-C532, C537-C553, and C550-C560. The region spanning 389-444 (HGHWSSWGPHSPCSRSCGGGVITRRRWCNNPRPAFGGRACVGEDLQAKMCNTQACE) is the TSP type-1 1 domain. The segment at 445 to 561 (KTQLEFMSEQ…VCGGDNSTCS (117 aa)) is cysteine-rich. The Cell attachment site motif lies at 503 to 505 (RGD). The interval 556–685 (DNSTCSSRNG…PDITFSYFQL (130 aa)) is spacer. N-linked (GlcNAc...) asparagine glycans are attached at residues N557, N564, N584, and N619. 7 TSP type-1 domains span residues 687–746 (QQAA…VSAP), 747–810 (CSPY…QPCP), 808–871 (PCPT…SLCS), 904–957 (WTPL…RARP), 958–1019 (CPAR…EPCP), 1020–1078 (ARWK…IADC), and 1079–1137 (AFRW…GPCA). Residues S703 and S762 are each glycosylated (O-linked (Fuc...) serine). N834 is a glycosylation site (N-linked (GlcNAc...) asparagine). O-linked (Fuc...) serine glycosylation occurs at S914. An O-linked (Fuc...) threonine glycan is attached at T973. A glycan (O-linked (Fuc...) serine) is linked at S1033. Residue N1057 is glycosylated (N-linked (GlcNAc...) asparagine). Residue S1093 is glycosylated (O-linked (Fuc...) serine). CUB domains follow at residues 1195–1302 (ACGR…FYKE) and 1293–1426 (QPAP…LALS).

Zn(2+) serves as cofactor. Ca(2+) is required as a cofactor. In terms of processing, the precursor is processed by a furin endopeptidase which cleaves off the pro-domain. Post-translationally, O-glycosylated. O-fucosylated by POFUT2 on a serine or a threonine residue found within the consensus sequence C1-X(2)-(S/T)-C2-G of the TSP type-1 repeat domains where C1 and C2 are the first and second cysteine residue of the repeat, respectively. Fucosylated repeats can then be further glycosylated by the addition of a beta-1,3-glucose residue by the glucosyltransferase, B3GALTL. Fucosylation mediates the efficient secretion of ADAMTS13. May also be C-glycosylated on tryptophan residues within the consensus sequence W-X-X-W of the TPRs, and also N-glycosylated. These other glycosylations can also facilitate secretion. As to expression, plasma. Expression is consistently high in liver, medium in lung and spleen, low in skeletal muscle and undetectable in heart, brain, kidney and testis.

Its subcellular location is the secreted. The catalysed reaction is The enzyme cleaves the von Willebrand factor at bond 842-Tyr-|-Met-843 within the A2 domain.. Zinc and calcium ions cooperatively modulate enzyme activity. The cleavage of the pro-domain is not required for protease activity. Dependence on calcium for proteolytic activity is mediated by the high affinity site. Functionally, cleaves the vWF multimers in plasma into smaller forms thereby controlling vWF-mediated platelet thrombus formation. This Mus musculus (Mouse) protein is A disintegrin and metalloproteinase with thrombospondin motifs 13 (Adamts13).